We begin with the raw amino-acid sequence, 1041 residues long: Nuclear migration protein unc-83 (1041 aa).

3 disordered regions span residues 258–283, 453–498, and 613–646; these read VGHL…TETV, IHGQ…LEDD, and IRNR…DSIS. Residues 456-465 are compositionally biased toward basic residues; the sequence is QKKPLRRASR. Positions 613-626 are enriched in basic and acidic residues; sequence IRNRDSDTAPEHSD. 2 coiled-coil regions span residues 785 to 816 and 931 to 951; these read RSKE…DLLA and KAEL…FNDM. The region spanning 986-1041 is the KASH domain; that stretch reads TENEPLTIAEAISSSRLIKFTFALSLLAALAAIFYYHVFGKPFGPHVTYVNGPPPV. The chain crosses the membrane as a helical; Anchor for type IV membrane protein span at residues 1005–1024; the sequence is FTFALSLLAALAAIFYYHVF.

Component of the unc-83-unc-84 LINC complex which contains at least unc-83 and unc-84. Within the unc-83-unc-84 LINC complex interacts with unc-84 (via C-terminus); the interaction is probably required to recruit unc-83 to the nuclear envelope where it then recruits dynein and kinesin-1 complexes to regulate nuclear migration. Interacts with bicd-1 and dlc-1. Interacts with nud-2 (via C-terminus); the interaction is direct, and is required for recruitment of nud-2 to the nuclear envelope. Interacts with klc-2; the interaction is direct. Predominantly expressed in migratory nuclei. Expressed in a variety of cell-types, including cells around the pharynx and in the uterus.

It is found in the nucleus membrane. The protein localises to the nucleus outer membrane. Functionally, cargo-specific adapter that is involved in nuclear migration during development and thereafter. Component of the unc-83-unc-84 LINC (LInker of Nucleoskeleton and Cytoskeleton) complex where it interacts with unc-84 to form a bridge connecting the nuclear envelope to the cytoskeleton which allows for nuclear transport along microtubules. Within the complex, connects the nuclear envelope to the microtubule cytoskeleton through the kinesin-1 light chain protein klc-2 (most likely within the Kinesin 1 motor complex) to regulate nuclear migrations. Moreover, within the complex, also recruits the large microtubule-associated bicd-1-dlc-1-egal-1 and lis-1-nud-2 complexes to the nuclear envelope to regulate both the bidirectional migration of nuclei and the extent of nuclear migrations. Not required for centrosome attachment to the nucleus. The polypeptide is Nuclear migration protein unc-83 (Caenorhabditis elegans).